Here is a 212-residue protein sequence, read N- to C-terminus: Golgi SNAP receptor complex member 2 homolog memb-1 (212 aa).

Residues 1–189 (MEAQYQSTNF…QVIDRRVRED (189 aa)) are Cytoplasmic-facing. Residues 190–210 (WIFVIGCIVCCIFMYAFYRFW) traverse the membrane as a helical; Anchor for type IV membrane protein segment. Residues 211 to 212 (RG) lie on the Vesicular side of the membrane.

The protein belongs to the GOSR2 family. As to quaternary structure, part of a unique SNARE complex.

The protein localises to the golgi apparatus. It is found in the cis-Golgi network membrane. The protein resides in the golgi apparatus membrane. It localises to the endoplasmic reticulum membrane. Its function is as follows. Involved in transport of proteins from the cis/medial-Golgi to the trans-Golgi network. This chain is Golgi SNAP receptor complex member 2 homolog memb-1, found in Caenorhabditis briggsae.